Here is a 264-residue protein sequence, read N- to C-terminus: Phosphoribosylaminoimidazole-succinocarboxamide synthase 1 (264 aa).

This sequence belongs to the SAICAR synthetase family.

It catalyses the reaction 5-amino-1-(5-phospho-D-ribosyl)imidazole-4-carboxylate + L-aspartate + ATP = (2S)-2-[5-amino-1-(5-phospho-beta-D-ribosyl)imidazole-4-carboxamido]succinate + ADP + phosphate + 2 H(+). It participates in purine metabolism; IMP biosynthesis via de novo pathway; 5-amino-1-(5-phospho-D-ribosyl)imidazole-4-carboxamide from 5-amino-1-(5-phospho-D-ribosyl)imidazole-4-carboxylate: step 1/2. This is Phosphoribosylaminoimidazole-succinocarboxamide synthase 1 (purC1) from Mesorhizobium japonicum (strain LMG 29417 / CECT 9101 / MAFF 303099) (Mesorhizobium loti (strain MAFF 303099)).